The chain runs to 425 residues: Serine--tRNA ligase (425 aa).

Residue 231 to 233 coordinates L-serine; sequence TAE. Position 262 to 264 (262 to 264) interacts with ATP; the sequence is RSE. Glu285 is a binding site for L-serine. Residue 349 to 352 participates in ATP binding; that stretch reads EISS. Ser385 contacts L-serine.

It belongs to the class-II aminoacyl-tRNA synthetase family. Type-1 seryl-tRNA synthetase subfamily. In terms of assembly, homodimer. The tRNA molecule binds across the dimer.

Its subcellular location is the cytoplasm. The enzyme catalyses tRNA(Ser) + L-serine + ATP = L-seryl-tRNA(Ser) + AMP + diphosphate + H(+). It catalyses the reaction tRNA(Sec) + L-serine + ATP = L-seryl-tRNA(Sec) + AMP + diphosphate + H(+). It functions in the pathway aminoacyl-tRNA biosynthesis; selenocysteinyl-tRNA(Sec) biosynthesis; L-seryl-tRNA(Sec) from L-serine and tRNA(Sec): step 1/1. Functionally, catalyzes the attachment of serine to tRNA(Ser). Is also able to aminoacylate tRNA(Sec) with serine, to form the misacylated tRNA L-seryl-tRNA(Sec), which will be further converted into selenocysteinyl-tRNA(Sec). This Bartonella henselae (strain ATCC 49882 / DSM 28221 / CCUG 30454 / Houston 1) (Rochalimaea henselae) protein is Serine--tRNA ligase.